The chain runs to 355 residues: tRNA uridine(34) hydroxylase (355 aa).

The 95-residue stretch at 146–240 (DDPDTVFVDM…YARQAKAQGL (95 aa)) folds into the Rhodanese domain. Catalysis depends on C200, which acts as the Cysteine persulfide intermediate.

Belongs to the TrhO family.

It carries out the reaction uridine(34) in tRNA + AH2 + O2 = 5-hydroxyuridine(34) in tRNA + A + H2O. Catalyzes oxygen-dependent 5-hydroxyuridine (ho5U) modification at position 34 in tRNAs. The polypeptide is tRNA uridine(34) hydroxylase (Pectobacterium carotovorum subsp. carotovorum (strain PC1)).